Reading from the N-terminus, the 1040-residue chain is Multidrug resistance protein MdtB (1040 aa).

Transmembrane regions (helical) follow at residues 15–37 (LFIM…GIIG), 345–362 (FELM…YLFL), 367–389 (ATII…MVFL), 396–418 (LTLM…VIEN), 438–460 (GEIG…PLLF), 472–494 (FAIT…TPMM), 535–557 (HPWL…WVFI), 867–889 (VWLI…ESFI), 909–931 (LMIA…IGIV), 968–990 (ILMT…GVGA), and 1000–1022 (MVGG…YLLF).

It belongs to the resistance-nodulation-cell division (RND) (TC 2.A.6) family. MdtB subfamily. Part of a tripartite efflux system composed of MdtA, MdtB and MdtC. MdtB forms a heteromultimer with MdtC.

The protein resides in the cell inner membrane. Its function is as follows. The MdtABC tripartite complex confers resistance against novobiocin and deoxycholate. The polypeptide is Multidrug resistance protein MdtB (Escherichia coli O157:H7).